The primary structure comprises 180 residues: NADH-quinone oxidoreductase subunit I (180 aa).

4Fe-4S ferredoxin-type domains are found at residues 50-80 (LTRNIDGQERCVACNLCAVVCPVDCISLQKS) and 90-119 (KFFRINFSRCIFCGLCEEACPTAAIQLMPD). [4Fe-4S] cluster-binding residues include C60, C63, C66, C70, C99, C102, C105, and C109.

The protein belongs to the complex I 23 kDa subunit family. NDH-1 is composed of 13 different subunits. Subunits NuoA, H, J, K, L, M, N constitute the membrane sector of the complex. Requires [4Fe-4S] cluster as cofactor.

Its subcellular location is the cell membrane. It carries out the reaction a quinone + NADH + 5 H(+)(in) = a quinol + NAD(+) + 4 H(+)(out). In terms of biological role, NDH-1 shuttles electrons from NADH, via FMN and iron-sulfur (Fe-S) centers, to quinones in the respiratory chain. The immediate electron acceptor for the enzyme in this species is believed to be ubiquinone. Couples the redox reaction to proton translocation (for every two electrons transferred, four hydrogen ions are translocated across the cytoplasmic membrane), and thus conserves the redox energy in a proton gradient. The chain is NADH-quinone oxidoreductase subunit I from Buchnera aphidicola subsp. Acyrthosiphon pisum (strain APS) (Acyrthosiphon pisum symbiotic bacterium).